Here is a 428-residue protein sequence, read N- to C-terminus: Glucose-1-phosphate adenylyltransferase (428 aa).

Alpha-D-glucose 1-phosphate-binding positions include tyrosine 99, glycine 164, 179-180, and serine 190; that span reads EK.

Belongs to the bacterial/plant glucose-1-phosphate adenylyltransferase family. Homotetramer.

It carries out the reaction alpha-D-glucose 1-phosphate + ATP + H(+) = ADP-alpha-D-glucose + diphosphate. It participates in glycan biosynthesis; glycogen biosynthesis. Involved in the biosynthesis of ADP-glucose, a building block required for the elongation reactions to produce glycogen. Catalyzes the reaction between ATP and alpha-D-glucose 1-phosphate (G1P) to produce pyrophosphate and ADP-Glc. This Thermomicrobium roseum (strain ATCC 27502 / DSM 5159 / P-2) protein is Glucose-1-phosphate adenylyltransferase.